We begin with the raw amino-acid sequence, 125 residues long: Fluoride-specific ion channel FluC (125 aa).

The next 4 helical transmembrane spans lie at 1 to 21 (MIQALLVAVGGAIGSLLRYYV), 32 to 52 (AFPWGTLAVNVVGCFVIGVFA), 68 to 88 (LLITGFLGGFTTFSAFSLDAI), and 101 to 121 (IYTVASVGLSMAAVMAGLAVM). 2 residues coordinate Na(+): G75 and T78.

The protein belongs to the fluoride channel Fluc/FEX (TC 1.A.43) family.

The protein localises to the cell inner membrane. The catalysed reaction is fluoride(in) = fluoride(out). Its activity is regulated as follows. Na(+) is not transported, but it plays an essential structural role and its presence is essential for fluoride channel function. Fluoride-specific ion channel. Important for reducing fluoride concentration in the cell, thus reducing its toxicity. The sequence is that of Fluoride-specific ion channel FluC from Rhizobium leguminosarum bv. trifolii (strain WSM2304).